Here is a 591-residue protein sequence, read N- to C-terminus: ATP-dependent RNA helicase DDX55 (591 aa).

Residues 9 to 37 (WSSLPVALSPGVLRALQDLGFDRMTPVQS) carry the Q motif motif. The Helicase ATP-binding domain maps to 40–223 (IPLFMSNKDV…RAGLRNPVRI (184 aa)). Residue 53-60 (AVTGSGKT) coordinates ATP. The short motif at 171–174 (DEAD) is the DEAD box element. Residues 254–402 (KFNQLVHFLR…EMQPQRNVLD (149 aa)) form the Helicase C-terminal domain. Disordered regions lie at residues 482–559 (DSIP…NDTR) and 571–591 (EEEF…AAAD). Positions 485-513 (PFKDKNREKQRQKQLEQQRKEREESEGKK) are enriched in basic and acidic residues. Residues 486-542 (FKDKNREKQRQKQLEQQRKEREESEGKKKFIKNKSWSKQKAKREKKRKLTAKRKREE) are a coiled coil. Residues 514–538 (KFIKNKSWSKQKAKREKKRKLTAKR) show a composition bias toward basic residues. Positions 533–562 (KLTAKRKREEGSDMEDEDMEELLNDTRLLK) are important for nuclear localization. Residues 544–555 (SDMEDEDMEELL) are compositionally biased toward acidic residues.

This sequence belongs to the DEAD box helicase family. DDX55/SPB4 subfamily. Interacts with 28S rRNA. Interacts with double-stranded RNA substrates in vitro; the interaction stimulates ATPase activity.

The protein resides in the nucleus. It is found in the nucleoplasm. It catalyses the reaction ATP + H2O = ADP + phosphate + H(+). Probable ATP-binding RNA helicase. Has ATPase activity and is involved in the maturation of precursor large subunit rRNAs. This is ATP-dependent RNA helicase DDX55 (DDX55) from Gallus gallus (Chicken).